Consider the following 51-residue polypeptide: Putative antitoxin VapB6 (51 aa).

Its function is as follows. Antitoxin component of a possible type II toxin-antitoxin (TA) system. The cognate toxin is VapC6. This chain is Putative antitoxin VapB6 (vapB6), found in Mycobacterium tuberculosis (strain CDC 1551 / Oshkosh).